Reading from the N-terminus, the 323-residue chain is tRNA U34 carboxymethyltransferase (323 aa).

Carboxy-S-adenosyl-L-methionine is bound by residues K91, W105, K110, G130, D152–T154, I181–E182, M196, Y200, and R315.

Belongs to the class I-like SAM-binding methyltransferase superfamily. CmoB family. Homotetramer.

The enzyme catalyses carboxy-S-adenosyl-L-methionine + 5-hydroxyuridine(34) in tRNA = 5-carboxymethoxyuridine(34) in tRNA + S-adenosyl-L-homocysteine + H(+). Its function is as follows. Catalyzes carboxymethyl transfer from carboxy-S-adenosyl-L-methionine (Cx-SAM) to 5-hydroxyuridine (ho5U) to form 5-carboxymethoxyuridine (cmo5U) at position 34 in tRNAs. This is tRNA U34 carboxymethyltransferase from Salmonella agona (strain SL483).